A 248-amino-acid chain; its full sequence is Ubiquinone/menaquinone biosynthesis C-methyltransferase UbiE (248 aa).

Residues Ser68, Asp92, and 120–121 (NA) contribute to the S-adenosyl-L-methionine site.

The protein belongs to the class I-like SAM-binding methyltransferase superfamily. MenG/UbiE family.

The enzyme catalyses a 2-demethylmenaquinol + S-adenosyl-L-methionine = a menaquinol + S-adenosyl-L-homocysteine + H(+). It catalyses the reaction a 2-methoxy-6-(all-trans-polyprenyl)benzene-1,4-diol + S-adenosyl-L-methionine = a 5-methoxy-2-methyl-3-(all-trans-polyprenyl)benzene-1,4-diol + S-adenosyl-L-homocysteine + H(+). It participates in quinol/quinone metabolism; menaquinone biosynthesis; menaquinol from 1,4-dihydroxy-2-naphthoate: step 2/2. It functions in the pathway cofactor biosynthesis; ubiquinone biosynthesis. Methyltransferase required for the conversion of demethylmenaquinol (DMKH2) to menaquinol (MKH2) and the conversion of 2-polyprenyl-6-methoxy-1,4-benzoquinol (DDMQH2) to 2-polyprenyl-3-methyl-6-methoxy-1,4-benzoquinol (DMQH2). This is Ubiquinone/menaquinone biosynthesis C-methyltransferase UbiE from Rickettsia typhi (strain ATCC VR-144 / Wilmington).